The primary structure comprises 1588 residues: RB1-inducible coiled-coil protein 1 (1588 aa).

Phosphoserine is present on residues serine 222, serine 229, and serine 237. Position 238 is a phosphothreonine (threonine 238). Phosphoserine occurs at positions 243, 253, 257, and 261. The Nuclear localization signal motif lies at 565 to 568; sequence KPRK. A phosphoserine mark is found at serine 623, serine 646, serine 649, serine 652, serine 733, serine 1087, serine 1366, and serine 1478. Positions 638-674 are disordered; it reads QKVSTSQASPQSAASPRIESTTGITTTTSPKTPPPLT. A compositionally biased stretch (low complexity) spans 643 to 667; it reads SQASPQSAASPRIESTTGITTTTSP. An FFAT motif is present at residues 730 to 736; the sequence is DFMSAVN. Coiled coils occupy residues 858–1393 and 1440–1479; these read LKEK…TSSF and SVQENMLSEEKQRIMLLERTLQLKEEENKRLNQRLMSQSL.

Part of a complex containing ATG13/KIAA0652, ULK1 and RB1CC1. This complex associates with ATG101. Interacts with PTK2/FAK1 and PTK2B/PYK2. Interacts with GABARAP and GABARAPL1. Interacts with ATG16L1; the interaction is required for ULK1 complex-dependent autophagy. Interacts with RNF111, SKI and SMAD7. Interacts with COP1 in the cytoplasm of proliferating cells in response to UV stimulation. Interacts with TP53. Interacts with C9orf72. Interacts with WDR45B. Interacts with ATG13; this interaction is increased in the absence of TMEM39A. Interacts with WIPI2. Interacts with TAX1BP1. Interacts (via phosphorylated FFAT motif) with MOSPD2. In terms of processing, phosphorylation at Ser-733 of the FFAT motif activates interaction with MOSPD2. As to expression, expressed abundantly in heart and testis, and moderately in kidney, liver and skeletal muscles. Very low expression levels in lung and spleen. Colocalizes with RB1 in various tissues.

It is found in the nucleus. It localises to the cytoplasm. Its subcellular location is the cytosol. The protein localises to the preautophagosomal structure. The protein resides in the lysosome. Involved in autophagy. Regulates early events but also late events of autophagosome formation through direct interaction with Atg16L1. Required for the formation of the autophagosome-like double-membrane structure that surrounds the Salmonella-containing vacuole (SCV) during S.typhimurium infection and subsequent xenophagy. Involved in repair of DNA damage caused by ionizing radiation, which subsequently improves cell survival by decreasing apoptosis. Inhibits PTK2/FAK1 and PTK2B/PYK2 kinase activity, affecting their downstream signaling pathways. Plays a role as a modulator of TGF-beta-signaling by restricting substrate specificity of RNF111. Functions as a DNA-binding transcription factor. Is a potent regulator of the RB1 pathway through induction of RB1 expression. Plays a crucial role in muscular differentiation. Plays an indispensable role in fetal hematopoiesis and in the regulation of neuronal homeostasis. In Mus musculus (Mouse), this protein is RB1-inducible coiled-coil protein 1.